A 522-amino-acid polypeptide reads, in one-letter code: Lysine--tRNA ligase (522 aa).

Positions 44–52 match the 'HIGH' region motif; it reads PSGLPHIGT. A 'KMSKS' region motif is present at residues 290-294; that stretch reads KISKS. Residue lysine 293 participates in ATP binding.

It belongs to the class-I aminoacyl-tRNA synthetase family.

The protein localises to the cytoplasm. It carries out the reaction tRNA(Lys) + L-lysine + ATP = L-lysyl-tRNA(Lys) + AMP + diphosphate. This is Lysine--tRNA ligase from Rickettsia conorii (strain ATCC VR-613 / Malish 7).